The primary structure comprises 297 residues: Nucleotide-binding protein CJA_2809 (297 aa).

ATP is bound at residue 8–15 (GLSGSGKT). 59-62 (DVRN) serves as a coordination point for GTP.

This sequence belongs to the RapZ-like family.

Functionally, displays ATPase and GTPase activities. The chain is Nucleotide-binding protein CJA_2809 from Cellvibrio japonicus (strain Ueda107) (Pseudomonas fluorescens subsp. cellulosa).